Here is a 408-residue protein sequence, read N- to C-terminus: Peptidase T (408 aa).

H78 provides a ligand contact to Zn(2+). Residue D80 is part of the active site. D141 contacts Zn(2+). The Proton acceptor role is filled by E175. Positions 176, 198, and 380 each coordinate Zn(2+).

The protein belongs to the peptidase M20B family. Zn(2+) serves as cofactor.

It localises to the cytoplasm. The catalysed reaction is Release of the N-terminal residue from a tripeptide.. Functionally, cleaves the N-terminal amino acid of tripeptides. The protein is Peptidase T of Clostridium botulinum (strain ATCC 19397 / Type A).